Consider the following 1062-residue polypeptide: NACHT, LRR and PYD domains-containing protein 2 (1062 aa).

The region spanning 1–94 (MVSSAQMGFN…SERAKDEVRE (94 aa)) is the Pyrin domain. An NACHT domain is found at 207-526 (YTVVLYGPAG…LEKEEEEDRD (320 aa)). 213-220 (GPAGLGKT) contributes to the ATP binding site. At S671 the chain carries Phosphoserine. LRR repeat units lie at residues 812-832 (SLTCVNLSDNELLDEGAKLLY), 841-861 (FLQRLSLENCHLTEANCKDLA), 869-889 (ELTHLCLAKNPIGNTGVKFLC), 898-918 (KLQTLVLWNCDITSDGCCDLT), 926-946 (SLLCLDLGLNHIGVKGMKFLC), 955-976 (NLRCLWLWGCSIPPFSCEDLCS), 983-1003 (SLVTLDLGQNPLGSSGVKMLF), and 1010-1033 (SGTLRTLRLKIDDFNDELNKLLEE).

The protein belongs to the NLRP family. As to quaternary structure, interacts with CHUK. Interacts with IKBKB. Interacts with IKBKG. Interacts with MEFV. Interacts with PYCARD. Interacts (via pyrin domain) with PYDC2. Interacts with CARD8. As to expression, expressed at high levels in lung, placenta and thymus and at lower levels in ovary, intestine and brain. Highly abundant in oocytes and early embryos, however poorly expressed in somatic tissues such as brain, kidney, liver and spinal cord.

The protein localises to the cytoplasm. Suppresses TNF- and CD40-induced NFKB1 activity at the level of the IKK complex, by inhibiting NFKBIA degradation induced by TNF. When associated with PYCARD, activates CASP1, leading to the secretion of mature pro-inflammatory cytokine IL1B. May be a component of the inflammasome, a protein complex which also includes PYCARD, CARD8 and CASP1 and whose function would be the activation of pro-inflammatory caspases. This is NACHT, LRR and PYD domains-containing protein 2 (NLRP2) from Homo sapiens (Human).